A 181-amino-acid chain; its full sequence is Sodium/potassium-transporting ATPase subunit beta-1-interacting protein 3 (181 aa).

Transmembrane regions (helical) follow at residues 2 to 22, 35 to 55, 62 to 82, and 152 to 172; these read GCCT…LSAL, APIL…FGTI, IMVY…IICF, and VQIL…SISM.

Belongs to the NKAIN family. As to quaternary structure, interacts with ATP1B1. In terms of tissue distribution, detected in the brain only and specifically in neurons. Expressed in multiple regions such as cerebral cortex, thalamus, hippocampus, olfactory bulb and brainstem as well as in cerebellum with low expression in granular cell layer.

The protein resides in the cell membrane. The chain is Sodium/potassium-transporting ATPase subunit beta-1-interacting protein 3 (Nkain3) from Mus musculus (Mouse).